A 432-amino-acid polypeptide reads, in one-letter code: tRNA modification GTPase MnmE (432 aa).

The (6S)-5-formyl-5,6,7,8-tetrahydrofolate site is built by R23, E85, and K124. The TrmE-type G domain maps to 217–362; the sequence is GARLALIGAP…LKEAVREALL (146 aa). N227 is a K(+) binding site. GTP-binding positions include 227–232, 246–252, and 271–274; these read NAGKSS, SPIPGTT, and DTAG. S231 is a binding site for Mg(2+). S246, I248, and T251 together coordinate K(+). A Mg(2+)-binding site is contributed by T252. (6S)-5-formyl-5,6,7,8-tetrahydrofolate is bound at residue K432.

It belongs to the TRAFAC class TrmE-Era-EngA-EngB-Septin-like GTPase superfamily. TrmE GTPase family. In terms of assembly, homodimer. Heterotetramer of two MnmE and two MnmG subunits. It depends on K(+) as a cofactor.

The protein resides in the cytoplasm. Its function is as follows. Exhibits a very high intrinsic GTPase hydrolysis rate. Involved in the addition of a carboxymethylaminomethyl (cmnm) group at the wobble position (U34) of certain tRNAs, forming tRNA-cmnm(5)s(2)U34. The polypeptide is tRNA modification GTPase MnmE (Thermus thermophilus (strain ATCC 27634 / DSM 579 / HB8)).